Reading from the N-terminus, the 214-residue chain is Coiled-coil domain-containing protein 169 (214 aa).

Residues aspartate 29 to methionine 154 are a coiled coil. Positions serine 155–aspartate 170 are enriched in polar residues. A disordered region spans residues serine 155–proline 214.

The protein belongs to the CCDC169 family.

The protein is Coiled-coil domain-containing protein 169 (CCDC169) of Homo sapiens (Human).